Reading from the N-terminus, the 197-residue chain is Probable nicotinate-nucleotide adenylyltransferase (197 aa).

This sequence belongs to the NadD family.

It catalyses the reaction nicotinate beta-D-ribonucleotide + ATP + H(+) = deamido-NAD(+) + diphosphate. It participates in cofactor biosynthesis; NAD(+) biosynthesis; deamido-NAD(+) from nicotinate D-ribonucleotide: step 1/1. Its function is as follows. Catalyzes the reversible adenylation of nicotinate mononucleotide (NaMN) to nicotinic acid adenine dinucleotide (NaAD). The sequence is that of Probable nicotinate-nucleotide adenylyltransferase from Porphyromonas gingivalis (strain ATCC 33277 / DSM 20709 / CIP 103683 / JCM 12257 / NCTC 11834 / 2561).